The primary structure comprises 481 residues: UDP-N-acetylmuramate--L-alanine ligase (481 aa).

122–128 (GVHGKTT) contributes to the ATP binding site.

Belongs to the MurCDEF family.

Its subcellular location is the cytoplasm. The enzyme catalyses UDP-N-acetyl-alpha-D-muramate + L-alanine + ATP = UDP-N-acetyl-alpha-D-muramoyl-L-alanine + ADP + phosphate + H(+). It participates in cell wall biogenesis; peptidoglycan biosynthesis. In terms of biological role, cell wall formation. The chain is UDP-N-acetylmuramate--L-alanine ligase from Treponema pallidum (strain Nichols).